A 453-amino-acid chain; its full sequence is Validoxylamine A glucosyltransferase (453 aa).

Belongs to the glycosyltransferase 2 family. The cofactor is Mn(2+).

The catalysed reaction is validoxylamine A + UDP-alpha-D-glucose = validamycin A + UDP + H(+). Functionally, involved in the biosynthesis of the antifungal agent validamycin A. Catalyzes the final attachment of glucose from UDP-alpha-D-glucose to validoxylamine A to yield validamycin A. The polypeptide is Validoxylamine A glucosyltransferase (Streptomyces hygroscopicus subsp. limoneus).